The sequence spans 122 residues: Large ribosomal subunit protein uL14 (122 aa).

This sequence belongs to the universal ribosomal protein uL14 family. As to quaternary structure, part of the 50S ribosomal subunit. Forms a cluster with proteins L3 and L19. In the 70S ribosome, L14 and L19 interact and together make contacts with the 16S rRNA in bridges B5 and B8.

In terms of biological role, binds to 23S rRNA. Forms part of two intersubunit bridges in the 70S ribosome. In Chlorobaculum parvum (strain DSM 263 / NCIMB 8327) (Chlorobium vibrioforme subsp. thiosulfatophilum), this protein is Large ribosomal subunit protein uL14.